A 99-amino-acid chain; its full sequence is UPF0213 protein SP_1535 (99 aa).

Residues 3–78 (HKAYMYVLEC…KRKKRPQKEE (76 aa)) enclose the GIY-YIG domain.

This sequence belongs to the UPF0213 family.

In Streptococcus pneumoniae serotype 4 (strain ATCC BAA-334 / TIGR4), this protein is UPF0213 protein SP_1535.